Here is a 234-residue protein sequence, read N- to C-terminus: Phosphoribosylaminoimidazole-succinocarboxamide synthase (234 aa).

Belongs to the SAICAR synthetase family.

The enzyme catalyses 5-amino-1-(5-phospho-D-ribosyl)imidazole-4-carboxylate + L-aspartate + ATP = (2S)-2-[5-amino-1-(5-phospho-beta-D-ribosyl)imidazole-4-carboxamido]succinate + ADP + phosphate + 2 H(+). Its pathway is purine metabolism; IMP biosynthesis via de novo pathway; 5-amino-1-(5-phospho-D-ribosyl)imidazole-4-carboxamide from 5-amino-1-(5-phospho-D-ribosyl)imidazole-4-carboxylate: step 1/2. The sequence is that of Phosphoribosylaminoimidazole-succinocarboxamide synthase from Streptococcus uberis (strain ATCC BAA-854 / 0140J).